Reading from the N-terminus, the 595-residue chain is Putative lipase atg15 (595 aa).

Topologically, residues 1–20 (MKGLRGHNKKSFWGNTRLSD) are cytoplasmic. Residues 21–41 (LLWPVTLLPGLISAYQPVYLG) form a helical; Signal-anchor for type II membrane protein membrane-spanning segment. Over 42-595 (SRQSSPFLPP…TTTGKHLGRF (554 aa)) the chain is Lumenal. N-linked (GlcNAc...) asparagine glycans are attached at residues N164, N199, N221, N279, and N303. Catalysis depends on S319, which acts as the Charge relay system. N465 is a glycosylation site (N-linked (GlcNAc...) asparagine).

The protein belongs to the AB hydrolase superfamily. Lipase family. In terms of assembly, binds to both phosphatidylinositol (PI) and phosphatidylinositol 3,5-bisphosphate (PIP2).

The protein localises to the endosome. Its subcellular location is the multivesicular body membrane. It is found in the prevacuolar compartment membrane. It carries out the reaction a triacylglycerol + H2O = a diacylglycerol + a fatty acid + H(+). Its function is as follows. Lipase which is essential for lysis of subvacuolar cytoplasm to vacuole targeted bodies and intravacuolar autophagic bodies. Involved in the lysis of intravacuolar multivesicular body (MVB) vesicles. The intravacuolar membrane disintegration by atg15 is critical to life span extension. The protein is Putative lipase atg15 (atg15) of Aspergillus niger (strain ATCC MYA-4892 / CBS 513.88 / FGSC A1513).